Consider the following 174-residue polypeptide: Ribosome maturation factor RimM (174 aa).

Residues 98–171 (EGEFYFHEII…KIEIELMEGL (74 aa)) form the PRC barrel domain.

It belongs to the RimM family. In terms of assembly, binds ribosomal protein uS19.

The protein localises to the cytoplasm. Functionally, an accessory protein needed during the final step in the assembly of 30S ribosomal subunit, possibly for assembly of the head region. Essential for efficient processing of 16S rRNA. May be needed both before and after RbfA during the maturation of 16S rRNA. It has affinity for free ribosomal 30S subunits but not for 70S ribosomes. This Bacillus subtilis (strain 168) protein is Ribosome maturation factor RimM.